Reading from the N-terminus, the 432-residue chain is 3-phosphoshikimate 1-carboxyvinyltransferase (432 aa).

3-phosphoshikimate-binding residues include K21, S22, and R26. K21 contacts phosphoenolpyruvate. Phosphoenolpyruvate contacts are provided by G93 and R121. The 3-phosphoshikimate site is built by S166, Q168, D318, and K345. Residue Q168 coordinates phosphoenolpyruvate. The active-site Proton acceptor is the D318. 2 residues coordinate phosphoenolpyruvate: R349 and R391.

It belongs to the EPSP synthase family. In terms of assembly, monomer.

It is found in the cytoplasm. The enzyme catalyses 3-phosphoshikimate + phosphoenolpyruvate = 5-O-(1-carboxyvinyl)-3-phosphoshikimate + phosphate. The protein operates within metabolic intermediate biosynthesis; chorismate biosynthesis; chorismate from D-erythrose 4-phosphate and phosphoenolpyruvate: step 6/7. In terms of biological role, catalyzes the transfer of the enolpyruvyl moiety of phosphoenolpyruvate (PEP) to the 5-hydroxyl of shikimate-3-phosphate (S3P) to produce enolpyruvyl shikimate-3-phosphate and inorganic phosphate. The sequence is that of 3-phosphoshikimate 1-carboxyvinyltransferase from Persephonella marina (strain DSM 14350 / EX-H1).